The primary structure comprises 1239 residues: Anion exchange protein 2 (1239 aa).

The tract at residues 1 to 237 is disordered; that stretch reads MSSAPRRPAK…HRSYNLQERR (237 aa). Residues 1-706 lie on the Cytoplasmic side of the membrane; the sequence is MSSAPRRPAK…DFRDALDPQC (706 aa). 2 stretches are compositionally biased toward basic and acidic residues: residues 37–49 and 58–75; these read ELHRTLGVERFEE and GGEEPGRSYGEEDFEYHR. 2 stretches are compositionally biased toward basic residues: residues 76 to 85 and 94 to 110; these read QSSHHIHHPL and RRRKTPQGPGRKPRRRP. Residues Ser113, Ser132, Ser144, Ser170, and Ser172 each carry the phosphoserine modification. Over residues 120 to 133 the composition is skewed to acidic residues; sequence TIEEGEEDEDEASE. Positions 141–155 are enriched in low complexity; the sequence is TQPSPVSTPSSVQFF. A compositionally biased stretch (low complexity) spans 189 to 207; the sequence is GAQAGTQVEEAEAVAVASG. Over residues 208-217 the composition is skewed to gly residues; sequence TAGGDDGGAS. Residue Ser241 is modified to Phosphoserine. Thr255 is subject to Phosphothreonine. At Lys272 the chain carries N6-methyllysine. The segment at 285-318 is disordered; sequence HLVRKNAKGSTQSGREGREPGPTPRARPRAPHKP. Phosphoserine is present on Ser441. The tract at residues 447 to 468 is disordered; that stretch reads SLLGHHHGQGAESDPHVTEPLI. Membrane (anion exchange) stretches follow at residues 706–1239 and 708–1239; these read CLAA…PMPV and AAVI…PMPV. A run of 4 helical transmembrane segments spans residues 707 to 727, 752 to 772, 794 to 814, and 824 to 844; these read LAAVIFIYFAALSPAITFGGL, FCLLGAQPLLVIGFSGPLLVF, IGFWLVLLALLMVALEGSFLV, and IFAFLISLIFIYETFYKLVKI. The Extracellular segment spans residues 845-895; it reads FQEHPLHGCSASNSSEVDGGENMTWAVARPTLGPGNRSLAGQSGQGKPRGQ. 3 N-linked (GlcNAc...) asparagine glycosylation sites follow: Asn857, Asn866, and Asn880. A helical transmembrane segment spans residues 896–916; it reads PNTALLSLVLMAGTFFIAFFL. The Cytoplasmic portion of the chain corresponds to 917-931; sequence RKFKNSRFFPGRIRR. 5 helical membrane passes run 932-952, 987-1007, 1034-1054, 1088-1108, and 1111-1131; these read VIGDFGVPIAILIMVLVDYSI, FPVWMMVASLLPAILVFILIF, LLLIVAMGGICALFGLPWLAA, RVTGLLVALLVGLSIVIGDLL, and IPLAVLFGIFLYMGVTSLNGI. A lipid anchor (S-palmitoyl cysteine) is attached at Cys1171. The chain crosses the membrane as a helical span at residues 1172 to 1192; the sequence is LALLWAVMSTAASLAFPFILI.

The protein belongs to the anion exchanger (TC 2.A.31) family.

Its subcellular location is the apical cell membrane. It is found in the basolateral cell membrane. The enzyme catalyses hydrogencarbonate(in) + chloride(out) = hydrogencarbonate(out) + chloride(in). Sodium-independent anion exchanger which mediates the electroneutral exchange of chloride for bicarbonate ions across the cell membrane. Plays an important role in osteoclast differentiation and function. Regulates bone resorption and calpain-dependent actin cytoskeleton organization in osteoclasts via anion exchange-dependent control of pH. Essential for intracellular pH regulation in CD8(+) T-cells upon CD3 stimulation, modulating CD8(+) T-cell response. In Pongo abelii (Sumatran orangutan), this protein is Anion exchange protein 2 (SLC4A2).